We begin with the raw amino-acid sequence, 222 residues long: Small ribosomal subunit protein uS2 (222 aa).

It belongs to the universal ribosomal protein uS2 family.

The sequence is that of Small ribosomal subunit protein uS2 from Karelsulcia muelleri (strain GWSS) (Sulcia muelleri).